The sequence spans 677 residues: Probable potassium transport system protein Kup (677 aa).

The next 12 helical transmembrane spans lie at 13–33 (GALIAIGIVFGDIGTSPLYTM), 54–74 (VSLVFWTLMLITTIKYVIIAL), 98–118 (WLLLPALIGGAALLADGTLTP), 137–157 (FIFPNNQTIVLFVVTVILLIV), 171–191 (IFGPVMLTWFLFIGFFGLVNI), 217–237 (TGIFILGSVFLATTGAEALYS), 249–269 (VSWIFVYTMLILNYMGQGAWI), 296–316 (IFGVVMAALAAIIASQALISG), 345–365 (MYIGTVNWLLCIIGLIIVWAF), 374–394 (AYGLSITITMLMTTLLLYQFI), 402–422 (ILAFFFVVIFGMIETVFLIAS), and 429–449 (GGYATLIIMVAILSVMMIWFY).

It belongs to the HAK/KUP transporter (TC 2.A.72) family.

The protein resides in the cell membrane. It catalyses the reaction K(+)(in) + H(+)(in) = K(+)(out) + H(+)(out). Transport of potassium into the cell. Likely operates as a K(+):H(+) symporter. The polypeptide is Probable potassium transport system protein Kup (Leuconostoc mesenteroides subsp. mesenteroides (strain ATCC 8293 / DSM 20343 / BCRC 11652 / CCM 1803 / JCM 6124 / NCDO 523 / NBRC 100496 / NCIMB 8023 / NCTC 12954 / NRRL B-1118 / 37Y)).